The primary structure comprises 784 residues: Kinesin-like protein Klp68D (784 aa).

The 326-residue stretch at 19–344 (CVQVVVRCRP…LRYASRAKSI (326 aa)) folds into the Kinesin motor domain. 106 to 113 (GQTGTGKT) is an ATP binding site. Positions 351-385 (NEDPQDAKLKEYQEEIERLKRLIGPQQQQRSEKQV) form a coiled coil. Disordered regions lie at residues 371 to 449 (RLIG…ERER), 605 to 652 (KFSS…PSSL), and 742 to 784 (IKSS…LVNK). A compositionally biased stretch (basic residues) spans 386–396 (TAKKQRVKKPK). Over residues 416–428 (PVEDDSDPEGAES) the composition is skewed to acidic residues. The stretch at 426–582 (AESESDKENE…KRQLLIIDNF (157 aa)) forms a coiled coil. Residues 429 to 449 (ESDKENEAEVAKSNEELERER) show a composition bias toward basic and acidic residues. Positions 622–634 (SSKRPVSHPQRRR) are enriched in basic residues. The segment covering 769-778 (KKPASAYPKA) has biased composition (low complexity).

The protein belongs to the TRAFAC class myosin-kinesin ATPase superfamily. Kinesin family. Kinesin II subfamily. In terms of tissue distribution, expressed primarily in the central nervous system and in a subset of the peripheral nervous system during embryogenesis.

It is found in the cytoplasm. The protein resides in the cytoskeleton. In terms of biological role, plus-end directed microtubule motor that may be used for anterograde axonal transport and could conceivably move cargos in fly neurons different than those moved by kinesin heavy chain or other plus-end directed motors. The polypeptide is Kinesin-like protein Klp68D (Klp68D) (Drosophila melanogaster (Fruit fly)).